We begin with the raw amino-acid sequence, 84 residues long: Cytochrome c oxidase subunit 12, mitochondrial (84 aa).

One can recognise a CHCH domain in the interval 27–70 (TKHCWQNYVDYHKCILAKGEDFAPCRQFWLAYRSLCPSGWYQRW). The Cx9C motif motif lies at 30 to 40 (CWQNYVDYHKC). 2 disulfide bridges follow: C30–C62 and C40–C51. A Cx10C motif motif is present at residues 51 to 62 (CRQFWLAYRSLC).

This sequence belongs to the cytochrome c oxidase subunit 6B family. In terms of assembly, component of the cytochrome c oxidase (complex IV, CIV), a multisubunit enzyme composed of 11 subunits. The complex is composed of a catalytic core of 3 subunits Cox1, Cox2 and Cox3, encoded in the mitochondrial DNA, and 8 supernumerary subunits Cox4, Cox5a/Cox5, Cox6, Cox7, Cox8, Cox7a/Cox9, Cox6b/Cox12 and Cox6a/Cox13, which are encoded in the nuclear genome. The complex exists as a monomer or a dimer and forms respiratory supercomplexes (SCs) in the inner mitochondrial membrane with NADH-ubiquinone oxidoreductase (complex I, CI) and ubiquinol-cytochrome c oxidoreductase (cytochrome b-c1 complex, complex III, CIII), resulting in various different assemblies (supercomplexes I(1)IV(1), I(1)III(3)IV(2), III(2)IV(1) and III(2)IV(2) as well as larger supercomplexes of compositions like I(1)III(2)IV(5-6)).

Its subcellular location is the mitochondrion inner membrane. Its pathway is energy metabolism; oxidative phosphorylation. Functionally, component of the cytochrome c oxidase, the last enzyme in the mitochondrial electron transport chain which drives oxidative phosphorylation. The respiratory chain contains 3 multisubunit complexes succinate dehydrogenase (complex II, CII), ubiquinol-cytochrome c oxidoreductase (cytochrome b-c1 complex, complex III, CIII) and cytochrome c oxidase (complex IV, CIV), that cooperate to transfer electrons derived from NADH and succinate to molecular oxygen, creating an electrochemical gradient over the inner membrane that drives transmembrane transport and the ATP synthase. Cytochrome c oxidase is the component of the respiratory chain that catalyzes the reduction of oxygen to water. Electrons originating from reduced cytochrome c in the intermembrane space (IMS) are transferred via the dinuclear copper A center (CU(A)) of Cox2 and heme A of Cox1 to the active site in Cox1, a binuclear center (BNC) formed by heme A3 and copper B (CU(B)). The BNC reduces molecular oxygen to 2 water molecules using 4 electrons from cytochrome c in the IMS and 4 protons from the mitochondrial matrix. The protein is Cytochrome c oxidase subunit 12, mitochondrial (cox-13) of Neurospora crassa (strain ATCC 24698 / 74-OR23-1A / CBS 708.71 / DSM 1257 / FGSC 987).